Consider the following 81-residue polypeptide: ATP synthase subunit c, chloroplastic (81 aa).

The next 2 helical transmembrane spans lie at 3–23 (AIVS…AAIG) and 57–77 (LAFM…LLFA).

The protein belongs to the ATPase C chain family. F-type ATPases have 2 components, F(1) - the catalytic core - and F(0) - the membrane proton channel. F(1) has five subunits: alpha(3), beta(3), gamma(1), delta(1), epsilon(1). F(0) has four main subunits: a(1), b(1), b'(1) and c(10-14). The alpha and beta chains form an alternating ring which encloses part of the gamma chain. F(1) is attached to F(0) by a central stalk formed by the gamma and epsilon chains, while a peripheral stalk is formed by the delta, b and b' chains.

The protein localises to the plastid. The protein resides in the chloroplast thylakoid membrane. Its function is as follows. F(1)F(0) ATP synthase produces ATP from ADP in the presence of a proton or sodium gradient. F-type ATPases consist of two structural domains, F(1) containing the extramembraneous catalytic core and F(0) containing the membrane proton channel, linked together by a central stalk and a peripheral stalk. During catalysis, ATP synthesis in the catalytic domain of F(1) is coupled via a rotary mechanism of the central stalk subunits to proton translocation. In terms of biological role, key component of the F(0) channel; it plays a direct role in translocation across the membrane. A homomeric c-ring of between 10-14 subunits forms the central stalk rotor element with the F(1) delta and epsilon subunits. The chain is ATP synthase subunit c, chloroplastic from Cyanidioschyzon merolae (strain NIES-3377 / 10D) (Unicellular red alga).